Here is a 435-residue protein sequence, read N- to C-terminus: Transmembrane protease serine 4 (435 aa).

Topologically, residues 1–30 are cytoplasmic; it reads MESDSGQPLNNRDIVPFRKPRRPQETFKKV. The helical; Signal-anchor for type II membrane protein transmembrane segment at 31 to 51 threads the bilayer; it reads GIPIIAVLLSLIALVIVALLI. Topologically, residues 52-435 are extracellular; the sequence is KVILDKYYFI…WIYNVRKSEM (384 aa). Positions 59–101 constitute an LDL-receptor class A domain; the sequence is YFICGSPLTFIQRGQLCDGHLDCASGEDEEHCVKDFPEKPGVA. Disulfide bonds link Cys62–Cys81, Cys75–Cys90, Cys125–Cys181, Cys138–Cys191, Cys194–Cys308, Cys228–Cys244, Cys354–Cys370, and Cys381–Cys408. In terms of domain architecture, SRCR spans 102–202; the sequence is VRLSKDRSTL…DCGKSLKTPR (101 aa). Residues Asn128 and Asn176 are each glycosylated (N-linked (GlcNAc...) asparagine). The 230-residue stretch at 203-432 folds into the Peptidase S1 domain; it reads VVGGVEAPVD…YLNWIYNVRK (230 aa). Active-site charge relay system residues include His243 and Asp288. Ser385 functions as the Charge relay system in the catalytic mechanism.

This sequence belongs to the peptidase S1 family. In terms of processing, proteolytically processed; probably by an autocatalytic mechanism.

It is found in the cell membrane. The protein localises to the secreted. Functionally, plasma membrane-anchored serine protease that directly induces processing of pro-uPA/PLAU into the active form through proteolytic activity. Seems to be capable of activating ENaC. This Mus musculus (Mouse) protein is Transmembrane protease serine 4.